We begin with the raw amino-acid sequence, 281 residues long: RAD52 motif-containing protein 1 (281 aa).

A necessary for nuclear localization and for nucleolar accumulation in response to heat shock region spans residues 1–92 (MAELISFVVP…KPLFQTSPVK (92 aa)). Positions 15-98 (KVLLVWDLST…SPVKVRLGTR (84 aa)) constitute an RRM domain. The segment at 90-133 (PVKVRLGTRHKALQHQAFALNSSRCQELANYYFGFSGWSKRIIK) is necessary for nuclear and nucleolar localization.

As to quaternary structure, homodimer.

The protein resides in the nucleus. Its subcellular location is the cytoplasm. It is found in the nucleolus. It localises to the cajal body. The protein localises to the PML body. May confer resistance to the antitumor agent cisplatin. Binds to DNA and RNA. This is RAD52 motif-containing protein 1 (Rdm1) from Mus musculus (Mouse).